Here is a 241-residue protein sequence, read N- to C-terminus: Small ribosomal subunit protein uS2 (241 aa).

This sequence belongs to the universal ribosomal protein uS2 family.

The protein is Small ribosomal subunit protein uS2 of Proteus mirabilis (strain HI4320).